The sequence spans 400 residues: MSDDLRRKIALSQFERAKNVLDATFQEAYEDDENDGDALGSLPSFNGQSNRNRKYTGKTGSTTDRISSKEKSSLPTWSDFFDNKELVSLPDRDLDVNTYYTLPTSLLSNTTSIPIFIFHHGAGSSGLSFANLAKELNTKLEGRCGCFAFDARGHAETKFKKADAPICFDRDSFIKDFVSLLNYWFKSKISQEPLQKVSVILIGHSLGGSICTFAYPKLSTELQKKILGITMLDIVEEAAIMALNKVEHFLQNTPNVFESINDAVDWHVQHALSRLRSSAEIAIPALFAPLKSGKVVRITNLKTFSPFWDTWFTDLSHSFVGLPVSKLLILAGNENLDKELIVGQMQGKYQLVVFQDSGHFIQEDSPIKTAITLIDFWKRNDSRNVVIKTNWGQHKTVQNT.

The interval 32–70 is disordered; it reads DENDGDALGSLPSFNGQSNRNRKYTGKTGSTTDRISSKE. The AB hydrolase-1 domain maps to 114–365; sequence PIFIFHHGAG…DSGHFIQEDS (252 aa). Residues Ser205, Asp233, and His359 contribute to the active site.

It belongs to the AB hydrolase superfamily. As to quaternary structure, interacts with and inactivates the phosphatase PP2A-like catalytic subunits PPG1, PPH21, PPH22, PPH3 and SIT4.

It carries out the reaction [phosphatase 2A protein]-C-terminal L-leucine methyl ester + H2O = [phosphatase 2A protein]-C-terminal L-leucine + methanol + H(+). Demethylates proteins that have been reversibly carboxymethylated. Demethylates the phosphatase PP2A catalytic subunits PPH21 and PPH22. Forms inactive complexes (PP2Ai) with phosphatase PP2A-like catalytic subunits. Involved in the regulation of cell cycle progression at START. The polypeptide is Protein phosphatase methylesterase 1 (PPE1) (Saccharomyces cerevisiae (strain ATCC 204508 / S288c) (Baker's yeast)).